The chain runs to 1309 residues: MIEEAIETAQRYNSQPILKRQKPIRPYICSTIDFQDERDFLAKTIFPQLNDFCSSRGTYFKAVDLRWSALKAHKSFTNNQFRQYSCLHSQHLKLCLDYVNRCFPFFICLLGQTYGDFLPDYTPFLLSKVKDLESLSKGEQNLYVAAKNGYPWVLKTPNCSLTEFEIIQAAFRKKSQFQFFYFRTSNSLLRTFSEEEEEEEEKLSSGYQVDRQGKVKVGKLKAKIIGKGLPVRFYRDLDELGDMVLKDWSAVVEELYPVTMIMENIDYKHSFENLYHEEFVENCKQVFVISKESNRTFEMLERFAIKDLELNSDSTVAGAGLDSILRINSLPTCKSILLLCGERGCGKSTLIANWVDDFKSRHPGVLMVPYFVGSTCESCDIMSVMHYFIMELQHRANGPQLEMDFLNEDSNVLVFSLLIEVFMAAISLKPCILVLDGIEELVGIYGISGQKAKDFSWLPRSLPPHCKFILSSVSSSLSCKSLCARPDVKTVELNSLGDEDTKFSIFRQHLSAPDQERFGQSKPILRKKPNLNPLKLTLIASELQECRIYRNEFQCLREYLEVASVQELWELILKRWVEDYSWPLKHKETTVDNVISGACGWVVDVLCLLCISHCGLAEDELLQILDMMGYRDHHKVTAVHWAAFRNATKNWIQEKPNGLLYFQHQSLRNAVEHKMLGVTISVRESNPNVSQNSTNHKKVHFHQVLMKYFQRQTIFWRVYQELPWHMKMSGYWEGLCGFITSPIITDFISKIQNPSLWTRLHLVHYWDVLLEAGSDVLEAFLLSAAKIEAEDSQKLKKRTTLSGMTVCPEALQATKFLTFLLFLWGFLTLLGNRRANNLFSGAAPFLVSVQSPSMTEMLLKAQNAIGELYLDIGMMQKGLTYFQKAWSNLLRFTLSDLKISQELMKQKVKVMNNLAKSASEEFLKENHVLEYATEVSKYVMDNPRDQATMRYTEGVLIPVGRVFALQGHSYSLLPILRRALGDRLSNKCMSYFSSAVLMEFLFSRSQRKQAIEYYKQVIKIKEKADSVATCKLVRKQLNISLSDTLCKLAGQLLSGDFCHHATMEAVSYLYRSLDLRAAHLGPSHASIEGILHLLREIQRSRGRRSWPQGMNQLYPEGSSCGFSLWENLPKLNFHSAQSSDTVNTAMCMNIHRFQRAKSTEPSLVSDKAKYFPGRGKKTLTPILSMSAEEKAQNSQIRNSLRKQPPRKKGVYPLKTYSLIDKNGSVRLSRQRVFSAELGSGRSLINSIYRQPLRAPLSADNPWKSISELVSEKWLFHTPHYCFTPQKSVFPRRSQIETKMLKTSHDFDKE.

TPR repeat units follow at residues 399-432, 651-684, 817-851, 859-892, 989-1024, and 1042-1079; these read PQLE…KPCI, WIQE…SVRE, LTFL…SVQS, LKAQ…LLRF, MSYF…KEKA, and SDTL…RAAH.

Its subcellular location is the cytoplasm. The chain is Tetratricopeptide repeat protein 41 from Rattus norvegicus (Rat).